The following is a 130-amino-acid chain: Small ribosomal subunit protein uS9 (130 aa).

A disordered region spans residues 102–130 (GFLTRDPRKKERKKYGLKKARKSPQFSKR). The segment covering 111–130 (KERKKYGLKKARKSPQFSKR) has biased composition (basic residues).

This sequence belongs to the universal ribosomal protein uS9 family.

This is Small ribosomal subunit protein uS9 from Finegoldia magna (strain ATCC 29328 / DSM 20472 / WAL 2508) (Peptostreptococcus magnus).